Consider the following 374-residue polypeptide: Protein Brevis radix-like 2 (374 aa).

Disordered regions lie at residues 12 to 43 (NTNN…IKSL) and 57 to 80 (AYKS…ADSD). Residues 65–80 (SGSSNQNKNRSYADSD) show a composition bias toward polar residues. A BRX 1 domain is found at 143-198 (KEWVAQVEPGVLITFVSLPEGGNDMKRIRFSREMFDKWQAQKWWAENFDKVMELYN). The tract at residues 205-316 (QSVPLPTPPR…EELSVSNASD (112 aa)) is disordered. Composition is skewed to polar residues over residues 246 to 259 (SSGS…TQTQ) and 267 to 288 (GLAT…SSVD). Positions 289–307 (ESARSSFSREEEEADHSGE) are enriched in basic and acidic residues. A BRX 2 domain is found at 319–374 (TEWVEQDEAGVYITIRALPDGTRELRRVRFSREKFGETNARLWWEQNRARIQQQYL).

This sequence belongs to the BRX family. As to expression, expressed in roots.

It is found in the nucleus. This Arabidopsis thaliana (Mouse-ear cress) protein is Protein Brevis radix-like 2 (BRXL2).